The chain runs to 148 residues: Endoribonuclease YbeY (148 aa).

Residues H113, H117, and H123 each contribute to the Zn(2+) site.

It belongs to the endoribonuclease YbeY family. It depends on Zn(2+) as a cofactor.

It is found in the cytoplasm. In terms of biological role, single strand-specific metallo-endoribonuclease involved in late-stage 70S ribosome quality control and in maturation of the 3' terminus of the 16S rRNA. This chain is Endoribonuclease YbeY, found in Borrelia duttonii (strain Ly).